Reading from the N-terminus, the 153-residue chain is Regulator of ribonuclease activity B (153 aa).

The disordered stretch occupies residues 114–153 (DPNADDDEYGDDGEFLDDEDEYGDDGEFFDDEDEEEPRVH). Over residues 115 to 153 (PNADDDEYGDDGEFLDDEDEYGDDGEFFDDEDEEEPRVH) the composition is skewed to acidic residues.

It belongs to the RraB family. Interacts with the C-terminal region of Rne.

The protein localises to the cytoplasm. Globally modulates RNA abundance by binding to RNase E (Rne) and regulating its endonucleolytic activity. Can modulate Rne action in a substrate-dependent manner by altering the composition of the degradosome. The protein is Regulator of ribonuclease activity B of Haemophilus influenzae (strain ATCC 51907 / DSM 11121 / KW20 / Rd).